Consider the following 89-residue polypeptide: Small ribosomal subunit protein uS15 (89 aa).

This sequence belongs to the universal ribosomal protein uS15 family. As to quaternary structure, part of the 30S ribosomal subunit. Forms a bridge to the 50S subunit in the 70S ribosome, contacting the 23S rRNA.

Functionally, one of the primary rRNA binding proteins, it binds directly to 16S rRNA where it helps nucleate assembly of the platform of the 30S subunit by binding and bridging several RNA helices of the 16S rRNA. In terms of biological role, forms an intersubunit bridge (bridge B4) with the 23S rRNA of the 50S subunit in the ribosome. The chain is Small ribosomal subunit protein uS15 from Desulfotalea psychrophila (strain LSv54 / DSM 12343).